Reading from the N-terminus, the 279-residue chain is Small ribosomal subunit protein uS9m (279 aa).

The protein belongs to the universal ribosomal protein uS9 family.

Its subcellular location is the mitochondrion. This chain is Small ribosomal subunit protein uS9m (MRPS9), found in Eremothecium gossypii (strain ATCC 10895 / CBS 109.51 / FGSC 9923 / NRRL Y-1056) (Yeast).